A 140-amino-acid polypeptide reads, in one-letter code: ATP synthase epsilon chain (140 aa).

This sequence belongs to the ATPase epsilon chain family. F-type ATPases have 2 components, CF(1) - the catalytic core - and CF(0) - the membrane proton channel. CF(1) has five subunits: alpha(3), beta(3), gamma(1), delta(1), epsilon(1). CF(0) has three main subunits: a, b and c.

It localises to the cell inner membrane. In terms of biological role, produces ATP from ADP in the presence of a proton gradient across the membrane. The sequence is that of ATP synthase epsilon chain from Nitrosomonas europaea (strain ATCC 19718 / CIP 103999 / KCTC 2705 / NBRC 14298).